A 365-amino-acid chain; its full sequence is Putative F-box/kelch-repeat protein At4g39290 (365 aa).

An F-box domain is found at 10-58; sequence QMTFSMLPDDLVLNCLARVSKVYYPSLSFVSKKFRSLIASTELQELRSF. Kelch repeat units follow at residues 118-165 and 167-213; these read DIYA…CVLN and KIYV…KIVG.

This Arabidopsis thaliana (Mouse-ear cress) protein is Putative F-box/kelch-repeat protein At4g39290.